The sequence spans 287 residues: Formamidopyrimidine-DNA glycosylase (287 aa).

P2 serves as the catalytic Schiff-base intermediate with DNA. The active-site Proton donor is E3. The Proton donor; for beta-elimination activity role is filled by K61. Positions 95, 115, and 157 each coordinate DNA. An FPG-type zinc finger spans residues 243-277 (NVYGRADQPCRRCGEPVRREAFMNRSSFSCPRCQP). The active-site Proton donor; for delta-elimination activity is the R267.

It belongs to the FPG family. Monomer. Zn(2+) serves as cofactor.

The enzyme catalyses Hydrolysis of DNA containing ring-opened 7-methylguanine residues, releasing 2,6-diamino-4-hydroxy-5-(N-methyl)formamidopyrimidine.. The catalysed reaction is 2'-deoxyribonucleotide-(2'-deoxyribose 5'-phosphate)-2'-deoxyribonucleotide-DNA = a 3'-end 2'-deoxyribonucleotide-(2,3-dehydro-2,3-deoxyribose 5'-phosphate)-DNA + a 5'-end 5'-phospho-2'-deoxyribonucleoside-DNA + H(+). Functionally, involved in base excision repair of DNA damaged by oxidation or by mutagenic agents. Acts as a DNA glycosylase that recognizes and removes damaged bases. Has a preference for oxidized purines, such as 7,8-dihydro-8-oxoguanine (8-oxoG). Has AP (apurinic/apyrimidinic) lyase activity and introduces nicks in the DNA strand. Cleaves the DNA backbone by beta-delta elimination to generate a single-strand break at the site of the removed base with both 3'- and 5'-phosphates. The chain is Formamidopyrimidine-DNA glycosylase from Salinispora tropica (strain ATCC BAA-916 / DSM 44818 / JCM 13857 / NBRC 105044 / CNB-440).